A 1722-amino-acid chain; its full sequence is Signal-induced proliferation-associated 1-like protein 2 (1722 aa).

Disordered regions lie at residues 1-29 (MSDPRPSQAEKHKLGRAASKFKDPSRAMQ) and 45-73 (MGPATLNTSSLSEGGGGGGGPANGTPAVP). Residues 57-66 (EGGGGGGGPA) are compositionally biased toward gly residues. Phosphoserine occurs at positions 149, 380, and 384. Residues 362 to 404 (ASAASQTPVPVGPAGGCESPLGSKEDLNAKENPDADEGDGKSN) form a disordered region. Positions 384-403 (SKEDLNAKENPDADEGDGKS) are enriched in basic and acidic residues. Residues 596-813 (LLKLDEQGLS…RTRHEYLKDL (218 aa)) enclose the Rap-GAP domain. A PDZ domain is found at 951 to 1027 (EMTLRRNGLG…VKVVIIQPHE (77 aa)). The residue at position 1030 (serine 1030) is a Phosphoserine. Disordered regions lie at residues 1068-1172 (HRVP…DHED), 1197-1246 (ERAL…FGSG), and 1328-1361 (AADGSMGDLSEVSSHSSGSHRSGSPSTHCSKSTG). Low complexity-rich tracts occupy residues 1091–1103 (LQCQPLLQQAQAA) and 1120–1131 (SSPSNQSSSSDP). Positions 1197-1218 (ERALQKDGSCKDSPNKLSHIGD) are enriched in basic and acidic residues. Positions 1220–1237 (SCSSHSSSNTLSSNTSSN) are enriched in low complexity. Serine 1245 carries the post-translational modification Phosphoserine. Low complexity predominate over residues 1328-1355 (AADGSMGDLSEVSSHSSGSHRSGSPSTH). A phosphoserine mark is found at serine 1461, serine 1472, serine 1478, serine 1488, serine 1549, serine 1552, and serine 1591. Residues 1652-1712 (STLTGKVNQL…ATAQLRTFTE (61 aa)) are a coiled coil.

This chain is Signal-induced proliferation-associated 1-like protein 2 (Sipa1l2), found in Rattus norvegicus (Rat).